We begin with the raw amino-acid sequence, 345 residues long: C5a anaphylatoxin chemotactic receptor 1 (345 aa).

Topologically, residues 1 to 32 (MMVTVSYDYDYNSTFLPDGFVDNYVERLSFGD) are extracellular. Sulfotyrosine occurs at positions 9 and 11. The N-linked (GlcNAc...) asparagine glycan is linked to Asn12. Residues 33-59 (LVAVVIMVVVFLVGVPGNALVVWVTAC) traverse the membrane as a helical segment. At 60–64 (EARRH) the chain is on the cytoplasmic side. Residues 65 to 88 (INAIWFLNLAAADLLSCLALPILL) traverse the membrane as a helical segment. Over 89-105 (VSTVHLNHWYFGDTACK) the chain is Extracellular. A disulfide bond links Cys104 and Cys183. Residues 106–127 (VLPSLILLNMYTSILLLATISA) traverse the membrane as a helical segment. The Cytoplasmic segment spans residues 128-148 (DRLLLVLSPIWCQRFRGGCLA). A helical transmembrane segment spans residues 149-169 (WTACGLAWVLALLLSSPSFLY). Residues 170–195 (RRTHNEHFSFKVYCVTDYGRDISKER) are Extracellular-facing. Residues 196 to 221 (AVALVRLLVGFIVPLITLTACYTFLL) form a helical membrane-spanning segment. Over 222–237 (LRTWSRKATRSAKTVK) the chain is Cytoplasmic. A helical membrane pass occupies residues 238-260 (VVVAVVSSFFVFWLPYQVTGILL). The Extracellular portion of the chain corresponds to 261 to 277 (AWHSPNSATYRNTKALD). The chain crosses the membrane as a helical span at residues 278–298 (AVCVAFAYINCCINPIIYVVA). Residues 299 to 345 (GHGFQGRLLKSLPSVLRNVLTEESLDKRHQSFARSTVDTMPQKSESV) lie on the Cytoplasmic side of the membrane. Phosphoserine is present on residues Ser309, Ser312, Ser322, Ser329, and Ser333.

Belongs to the G-protein coupled receptor 1 family. In terms of assembly, homodimer. May also form higher-order oligomers. Interacts (when phosphorylated) with ARRB1 and ARRB2; the interaction is associated with internalization of C5aR. Post-translationally, sulfation plays a critical role in the association of C5aR with C5a, but no significant role in the ability of the receptor to transduce a signal and mobilize calcium in response to a small peptide agonist. In terms of processing, phosphorylated on serine residues in response to C5a binding, resulting in internalization of the receptor and short-term desensitization to C5a. As to expression, expressed strongly in macrophages and spleen. Weak expression detected in lung, liver, brain, heart and kidney.

The protein localises to the cell membrane. It localises to the cytoplasmic vesicle. Functionally, receptor for the chemotactic and inflammatory peptide anaphylatoxin C5a. The ligand interacts with at least two sites on the receptor: a high-affinity site on the extracellular N-terminus, and a second site in the transmembrane region which activates downstream signaling events. Receptor activation stimulates chemotaxis, granule enzyme release, intracellular calcium release and superoxide anion production. The chain is C5a anaphylatoxin chemotactic receptor 1 (C5AR1) from Cavia porcellus (Guinea pig).